The primary structure comprises 156 residues: Cell division protein SepF (156 aa).

The span at 23 to 36 (SYEKEQTDMKKQQD) shows a compositional bias: basic and acidic residues. The disordered stretch occupies residues 23 to 48 (SYEKEQTDMKKQQDPPEQQDVTFPKA). The span at 37-48 (PPEQQDVTFPKA) shows a compositional bias: polar residues.

It belongs to the SepF family. As to quaternary structure, homodimer. Interacts with FtsZ.

Its subcellular location is the cytoplasm. In terms of biological role, cell division protein that is part of the divisome complex and is recruited early to the Z-ring. Probably stimulates Z-ring formation, perhaps through the cross-linking of FtsZ protofilaments. Its function overlaps with FtsA. This is Cell division protein SepF from Bacillus cereus (strain ATCC 10987 / NRS 248).